A 345-amino-acid chain; its full sequence is Nicotinate-nucleotide--dimethylbenzimidazole phosphoribosyltransferase (345 aa).

Glu-312 (proton acceptor) is an active-site residue.

Belongs to the CobT family.

The enzyme catalyses 5,6-dimethylbenzimidazole + nicotinate beta-D-ribonucleotide = alpha-ribazole 5'-phosphate + nicotinate + H(+). It participates in nucleoside biosynthesis; alpha-ribazole biosynthesis; alpha-ribazole from 5,6-dimethylbenzimidazole: step 1/2. In terms of biological role, catalyzes the synthesis of alpha-ribazole-5'-phosphate from nicotinate mononucleotide (NAMN) and 5,6-dimethylbenzimidazole (DMB). This is Nicotinate-nucleotide--dimethylbenzimidazole phosphoribosyltransferase from Bacteroides fragilis (strain YCH46).